The primary structure comprises 458 residues: Hepatocyte nuclear factor 3-beta (458 aa).

Residues 14–93 (DWSSYYAEPE…AGAMAGMSGS (80 aa)) are transactivation domain 1. The Nuclear localization signal signature appears at 106-113 (LSPSLSPL). At T156 the chain carries Phosphothreonine; by PKB/AKT1. Positions 159–252 (KPPYSYISLI…ENGCYLRRQK (94 aa)) form a DNA-binding region, fork-head. 2 positions are modified to phosphoserine: S212 and S283. The disordered stretch occupies residues 286–365 (QLGEAAGSAS…PGLPPEAHLK (80 aa)). Residues 294–310 (ASETPAGTESPHSSASP) show a composition bias toward polar residues. The residue at position 301 (T301) is a Phosphothreonine. Phosphoserine is present on residues S303, S306, S307, and S309. Positions 339–352 (PGQQQQAAAHLLGP) are enriched in low complexity. Positions 361–458 (EAHLKPEHHY…VYSRPIMNSS (98 aa)) are transactivation domain 2. Phosphoserine occurs at positions 437 and 458.

In terms of assembly, binds DNA as a monomer. Binds TLE1. Interacts with FOXA1 and FOXA3. Interacts with PRKDC. Interacts with AKT1. Interacts with TET1; this interaction may recruit TET1 to specific genomic loci to mediate their demethylation. Post-translationally, phosphorylation on Thr-156 abolishes binding to target promoters and subsequent transcription activation upon insulin stimulation. Liver.

It localises to the nucleus. It is found in the cytoplasm. Transcription factor that is involved in embryonic development, establishment of tissue-specific gene expression and regulation of gene expression in differentiated tissues. Is thought to act as a 'pioneer' factor opening the compacted chromatin for other proteins through interactions with nucleosomal core histones and thereby replacing linker histones at target enhancer and/or promoter sites. Binds DNA with the consensus sequence 5'-[AC]A[AT]T[AG]TT[GT][AG][CT]T[CT]-3'. In embryonic development is required for notochord formation. Involved in the development of multiple endoderm-derived organ systems such as the liver, pancreas and lungs; FOXA1 and FOXA2 seem to have at least in part redundant roles. Originally described as a transcription activator for a number of liver genes such as AFP, albumin, tyrosine aminotransferase, PEPCK, etc. Interacts with the cis-acting regulatory regions of these genes. Involved in glucose homeostasis; regulates the expression of genes important for glucose sensing in pancreatic beta-cells and glucose homeostasis. Involved in regulation of fat metabolism. Acts synergistically with ONECUT1 to activate transcription of female-specific CYP2C12; the function is inhibited by growth hormone-activated STAT5B. Acts synergistically with HNF4A to activate transcription of APOA1. In Rattus norvegicus (Rat), this protein is Hepatocyte nuclear factor 3-beta (Foxa2).